A 65-amino-acid polypeptide reads, in one-letter code: Ferredoxin-like protein in vnf region (65 aa).

4Fe-4S ferredoxin-type domains lie at 2–29 (AMAI…VLQG) and 30–65 (GIYV…PLDD). [4Fe-4S] cluster-binding residues include Cys-10, Cys-13, Cys-16, Cys-20, Cys-39, Cys-42, Cys-50, and Cys-54.

The cofactor is [4Fe-4S] cluster.

This is Ferredoxin-like protein in vnf region from Azotobacter chroococcum mcd 1.